Here is a 430-residue protein sequence, read N- to C-terminus: Trigger factor (430 aa).

Residues 163-248 (GNIAIIDFKG…IKDIKVKELP (86 aa)) enclose the PPIase FKBP-type domain.

This sequence belongs to the FKBP-type PPIase family. Tig subfamily.

The protein resides in the cytoplasm. It catalyses the reaction [protein]-peptidylproline (omega=180) = [protein]-peptidylproline (omega=0). Functionally, involved in protein export. Acts as a chaperone by maintaining the newly synthesized protein in an open conformation. Functions as a peptidyl-prolyl cis-trans isomerase. This is Trigger factor from Clostridium botulinum (strain Langeland / NCTC 10281 / Type F).